The primary structure comprises 585 residues: Glutamate decarboxylase 2 (585 aa).

The tract at residues 1–25 (MASPGSGFWSFGSEDGSGDPENPST) is disordered. Ser3, Ser6, Ser10, and Ser13 each carry phosphoserine. Residues Cys30 and Cys45 are each lipidated (S-palmitoyl cysteine). Substrate is bound at residue 181-183 (QLS). Lys396 carries the post-translational modification N6-(pyridoxal phosphate)lysine. A substrate-binding site is contributed by Arg558.

The protein belongs to the group II decarboxylase family. In terms of assembly, homodimer. Requires pyridoxal 5'-phosphate as cofactor. Phosphorylated; which does not affect kinetic parameters or subcellular location. Post-translationally, palmitoylated; which is required for presynaptic clustering.

The protein localises to the cytoplasm. It localises to the cytosol. Its subcellular location is the cytoplasmic vesicle. It is found in the presynaptic cell membrane. The protein resides in the golgi apparatus membrane. It catalyses the reaction L-glutamate + H(+) = 4-aminobutanoate + CO2. Catalyzes the production of GABA. The sequence is that of Glutamate decarboxylase 2 (GAD2) from Canis lupus familiaris (Dog).